The chain runs to 778 residues: Glutathione biosynthesis bifunctional protein GshAB (778 aa).

Residues 1 to 354 (MVNLDKGLLK…EEFFKNHDMV (354 aa)) form a glutamate--cysteine ligase region. Residues 521-777 (KDILRENNIR…AGEKILDLLF (257 aa)) enclose the ATP-grasp domain. 548-606 (RLFKDEKIVIKPKSTNFGLGISIFPGEYSREDYDKAVEIAFREDSSILIEEFMTGKEYR) contacts ATP. D728, E747, and N749 together coordinate Mg(2+). Positions 728, 747, and 749 each coordinate Mn(2+).

It in the N-terminal section; belongs to the glutamate--cysteine ligase type 1 family. Type 2 subfamily. As to quaternary structure, monomer. Mg(2+) is required as a cofactor. It depends on Mn(2+) as a cofactor.

The enzyme catalyses L-cysteine + L-glutamate + ATP = gamma-L-glutamyl-L-cysteine + ADP + phosphate + H(+). It catalyses the reaction gamma-L-glutamyl-L-cysteine + glycine + ATP = glutathione + ADP + phosphate + H(+). It functions in the pathway sulfur metabolism; glutathione biosynthesis; glutathione from L-cysteine and L-glutamate: step 1/2. The protein operates within sulfur metabolism; glutathione biosynthesis; glutathione from L-cysteine and L-glutamate: step 2/2. Functionally, synthesizes glutathione from L-glutamate and L-cysteine via gamma-L-glutamyl-L-cysteine. The polypeptide is Glutathione biosynthesis bifunctional protein GshAB (Clostridium perfringens (strain 13 / Type A)).